The primary structure comprises 39 residues: Photosystem II reaction center protein J (39 aa).

Residues 7-27 (IPLWIVAVVAGLGVITVVGLF) form a helical membrane-spanning segment.

It belongs to the PsbJ family. PSII is composed of 1 copy each of membrane proteins PsbA, PsbB, PsbC, PsbD, PsbE, PsbF, PsbH, PsbI, PsbJ, PsbK, PsbL, PsbM, PsbT, PsbX, PsbY, PsbZ, Psb30/Ycf12, peripheral proteins PsbO, CyanoQ (PsbQ), PsbU, PsbV and a large number of cofactors. It forms dimeric complexes.

It localises to the cellular thylakoid membrane. In terms of biological role, one of the components of the core complex of photosystem II (PSII). PSII is a light-driven water:plastoquinone oxidoreductase that uses light energy to abstract electrons from H(2)O, generating O(2) and a proton gradient subsequently used for ATP formation. It consists of a core antenna complex that captures photons, and an electron transfer chain that converts photonic excitation into a charge separation. The sequence is that of Photosystem II reaction center protein J from Synechococcus sp. (strain JA-2-3B'a(2-13)) (Cyanobacteria bacterium Yellowstone B-Prime).